A 143-amino-acid polypeptide reads, in one-letter code: ATP synthase subunit b' (143 aa).

A helical transmembrane segment spans residues alanine 6–phenylalanine 26.

The protein belongs to the ATPase B chain family. As to quaternary structure, F-type ATPases have 2 components, F(1) - the catalytic core - and F(0) - the membrane proton channel. F(1) has five subunits: alpha(3), beta(3), gamma(1), delta(1), epsilon(1). F(0) has four main subunits: a(1), b(1), b'(1) and c(10-14). The alpha and beta chains form an alternating ring which encloses part of the gamma chain. F(1) is attached to F(0) by a central stalk formed by the gamma and epsilon chains, while a peripheral stalk is formed by the delta, b and b' chains.

It localises to the cellular thylakoid membrane. F(1)F(0) ATP synthase produces ATP from ADP in the presence of a proton or sodium gradient. F-type ATPases consist of two structural domains, F(1) containing the extramembraneous catalytic core and F(0) containing the membrane proton channel, linked together by a central stalk and a peripheral stalk. During catalysis, ATP synthesis in the catalytic domain of F(1) is coupled via a rotary mechanism of the central stalk subunits to proton translocation. In terms of biological role, component of the F(0) channel, it forms part of the peripheral stalk, linking F(1) to F(0). The b'-subunit is a diverged and duplicated form of b found in plants and photosynthetic bacteria. This is ATP synthase subunit b' from Synechocystis sp. (strain ATCC 27184 / PCC 6803 / Kazusa).